Here is a 325-residue protein sequence, read N- to C-terminus: MSRPSSTGPSANKPCSKQPPPPQTPHAPSPAAPPAAATISAAGPGSSAVPAAAAVISGPGAGGGADPVSPQHHELTSLFECPVCFDYVLPPILQCQAGHLVCNQCRQKLSCCPTCRGALTPSIRNLAMEKVASAVLFPCKYATTGCSLTLHHTEKPEHEDICEYRPYSCPCPGASCKWQGSLEAVMSHLMHAHKSITTLQGEDIVFLATDINLPGAVDWVMMQSCFGHHFMLVLEKQEKYEGHQQFFAIVLLIGTRKQAENFAYRLELNGNRRRLTWEATPRSIHDGVAAAIMNSDCLVFDTAIAHLFADNGNLGINVTISTCCQ.

Residues M1–C15 are compositionally biased toward polar residues. A disordered region spans residues M1–G43. At S6 the chain carries Phosphoserine. Residue S16 is modified to Phosphoserine; by DYRK2. The segment covering K17–P33 has biased composition (pro residues). At T24 the chain carries Phosphothreonine; by MAPK14. S29 carries the phosphoserine; by DYRK2 and MAPK14 modification. The segment covering P34–G43 has biased composition (low complexity). The residue at position 69 (S69) is a Phosphoserine; by DYRK2. Residues C81–R116 form an RING-type zinc finger. At T120 the chain carries Phosphothreonine; by DYRK2. An SBD region spans residues V131 to C323. Residues A134–K194 form an SIAH-type zinc finger. Zn(2+)-binding residues include C139, C146, H158, C162, C169, C176, H188, and H193.

The protein belongs to the SINA (Seven in absentia) family. As to quaternary structure, homodimer. Interacts with UBE2E2. Interacts with VAV1, without mediating its ubiquitin-mediated degradation. Interacts with CACYBP/SIP. Probable component of some large E3 complex possibly composed of UBE2D1, SIAH2, CACYBP/SIP, SKP1, APC and TBL1X. Interacts with UBE2I. Interacts with PEG10, which may inhibit its activity. Interacts with EGLN2 and SNCAIP. Interacts with DYRK2. Interacts with PEG3. Interacts with NR1D1 and NR1D2. Interacts with DCC. Interacts with AXIN1. In terms of processing, phosphorylated at Ser-29 by DYRK2; this increases the ubiquitin ligase activity and promotes degradation of EGLN3. Phosphorylated at Thr-24 and Ser-29 by MAPK14, which mediates the degradation by the proteasome of EGLN3. In terms of tissue distribution, widely expressed at low level in embryos and adults. Expressed in a specific population of germ cells within both the mouse ovary and testis. Absent in primordial oocytes but expressed in all growing oocytes, coincident with their recruitment from the pool of quiescent cells. Its level of expression increases as the oocytes mature. Expressed in Graafian follicles and in fertilized zygotes up until the two cell stage, a time of extensive maternal transcript degradation and zygotic gene activation. Expressed in the testis from postmeiotic spermatids.

The protein localises to the cytoplasm. Its subcellular location is the nucleus. It catalyses the reaction S-ubiquitinyl-[E2 ubiquitin-conjugating enzyme]-L-cysteine + [acceptor protein]-L-lysine = [E2 ubiquitin-conjugating enzyme]-L-cysteine + N(6)-ubiquitinyl-[acceptor protein]-L-lysine.. It functions in the pathway protein modification; protein ubiquitination. Its function is as follows. E3 ubiquitin-protein ligase that mediates ubiquitination and subsequent proteasomal degradation of target proteins. E3 ubiquitin ligases accept ubiquitin from an E2 ubiquitin-conjugating enzyme in the form of a thioester and then directly transfers the ubiquitin to targeted substrates. Mediates E3 ubiquitin ligase activity either through direct binding to substrates or by functioning as the essential RING domain subunit of larger E3 complexes. Mediates ubiquitination and proteasomal degradation of DYRK2 in response to hypoxia. Promotes monoubiquitination of SNCA. Triggers the ubiquitin-mediated degradation of many substrates, including proteins involved in transcription regulation (GPS2, POU2AF1, PML, NCOR1), a cell surface receptor (DCC), an antiapoptotic protein (BAG1), and a protein involved in synaptic vesicle function in neurons (SYP). It is thereby involved in apoptosis, tumor suppression, cell cycle, transcription and signaling processes. Has some overlapping function with SIAH1. Triggers the ubiquitin-mediated degradation of TRAF2, whereas SIAH1 does not. Regulates cellular clock function via ubiquitination of the circadian transcriptional repressors NR1D1 and NR1D2 leading to their proteasomal degradation. Plays an important role in mediating the rhythmic degradation/clearance of NR1D1 and NR1D2 contributing to their circadian profile of protein abundance. Mediates ubiquitination and degradation of EGLN2 and EGLN3 in response to the unfolded protein response (UPR), leading to their degradation and subsequent stabilization of ATF4. Also part of the Wnt signaling pathway in which it mediates the Wnt-induced ubiquitin-mediated proteasomal degradation of AXIN1. The protein is E3 ubiquitin-protein ligase SIAH2 (Siah2) of Mus musculus (Mouse).